The chain runs to 182 residues: Testis-expressed protein 29 (182 aa).

Residues 1–56 lie on the Extracellular side of the membrane; sequence MRYTTDIKKSPPQLLKTFAVCDISLYDICDYNVTRDQCKELGCCFYKGVCYKKVVP. Residues 57-77 form a helical membrane-spanning segment; the sequence is IYVQMFSTLIVLVTGIIIITI. Topologically, residues 78-182 are cytoplasmic; the sequence is IYRIVQEIKR…PPTDPSENPP (105 aa). The segment at 91 to 182 is disordered; the sequence is LSMNSTPKAS…PPTDPSENPP (92 aa). Low complexity predominate over residues 115–170; it reads RAPSRSPSRTSSTLSSRSPTTAPTTAPTTDPATDPATDPATDPATDPATDPATDPA. A compositionally biased stretch (pro residues) spans 171–182; that stretch reads TAPPTDPSENPP.

It is found in the membrane. This Rattus norvegicus (Rat) protein is Testis-expressed protein 29 (Tex29).